The sequence spans 103 residues: Pyrimidine/purine nucleoside phosphorylase (103 aa).

The protein belongs to the nucleoside phosphorylase PpnP family.

It catalyses the reaction a purine D-ribonucleoside + phosphate = a purine nucleobase + alpha-D-ribose 1-phosphate. The catalysed reaction is adenosine + phosphate = alpha-D-ribose 1-phosphate + adenine. It carries out the reaction cytidine + phosphate = cytosine + alpha-D-ribose 1-phosphate. The enzyme catalyses guanosine + phosphate = alpha-D-ribose 1-phosphate + guanine. It catalyses the reaction inosine + phosphate = alpha-D-ribose 1-phosphate + hypoxanthine. The catalysed reaction is thymidine + phosphate = 2-deoxy-alpha-D-ribose 1-phosphate + thymine. It carries out the reaction uridine + phosphate = alpha-D-ribose 1-phosphate + uracil. The enzyme catalyses xanthosine + phosphate = alpha-D-ribose 1-phosphate + xanthine. Catalyzes the phosphorolysis of diverse nucleosides, yielding D-ribose 1-phosphate and the respective free bases. Can use uridine, adenosine, guanosine, cytidine, thymidine, inosine and xanthosine as substrates. Also catalyzes the reverse reactions. The sequence is that of Pyrimidine/purine nucleoside phosphorylase from Shewanella denitrificans (strain OS217 / ATCC BAA-1090 / DSM 15013).